A 252-amino-acid polypeptide reads, in one-letter code: MKTVTVKDLVIGAGAPKIIVSLMAKDIARVKSEALAYRETDFDILEWRVDHFADLSNVESVMAAAKILRETMPEKPLLFTFRSAKEGGEQAISTEAYIALNRAAIDSGLVDMIDLELFTGDDQVKETVAYAHAHDVKVVMSNHDFHKTPEAEEIIARLRKMQSFDADIPKIALMPQSTSDVLTLLAATLEMQEQYADRPIITMSMAKTGVISRLAGEVFGSAATFGAVKKASAPGQISVNDLRILLTILHQA.

Residues Ser-21, 46 to 48 (EWR), and Arg-82 contribute to the 3-dehydroquinate site. Catalysis depends on His-143, which acts as the Proton donor/acceptor. Lys-170 acts as the Schiff-base intermediate with substrate in catalysis. 3-dehydroquinate is bound by residues Arg-213, Ser-232, and Gln-236.

Belongs to the type-I 3-dehydroquinase family. Homodimer.

It catalyses the reaction 3-dehydroquinate = 3-dehydroshikimate + H2O. Its pathway is metabolic intermediate biosynthesis; chorismate biosynthesis; chorismate from D-erythrose 4-phosphate and phosphoenolpyruvate: step 3/7. Involved in the third step of the chorismate pathway, which leads to the biosynthesis of aromatic amino acids. Catalyzes the cis-dehydration of 3-dehydroquinate (DHQ) and introduces the first double bond of the aromatic ring to yield 3-dehydroshikimate. This chain is 3-dehydroquinate dehydratase, found in Shigella dysenteriae.